The chain runs to 77 residues: U8-lycotoxin-Ls1n (77 aa).

The N-terminal stretch at 1 to 20 is a signal peptide; it reads MKLMIFTGLVLFAIVSLIEA. Residues 21–26 constitute a propeptide that is removed on maturation; sequence QAENEK.

It belongs to the neurotoxin 19 (CSTX) family. 08 (U8-Lctx) subfamily. In terms of processing, contains 4 disulfide bonds. As to expression, expressed by the venom gland.

The protein localises to the secreted. In Lycosa singoriensis (Wolf spider), this protein is U8-lycotoxin-Ls1n.